The chain runs to 305 residues: MQIELEKILNQNREKIAFGNLPTYIPELTRANKDALGIYISQLDGSEFKAGDYDYKFTIQSISKVITLIMALEDWGAEYIFECVGKEPTGDAFNSMMKLEIVRPSKPFNPMINAGAIAVTSKIKGKSPEERIQRIMDFFKLVTGNPDLKVNESIYMSEKSTGDRNRAMAYFMKDVGVITGDVEENLDLYFKQCSIEVTCKDIARIGLFLSSDGVLLETGKQIINPKHSKIAKALMTTCGMYNASGEFAINVGIPAKSGVGGGIMAVVPGKMGIGVIGPSLDEKGNSIAGVGVLEQLSKMLELSIF.

Ser-61, Asn-113, Glu-158, Asn-165, Tyr-189, Tyr-241, and Val-259 together coordinate substrate.

The protein belongs to the glutaminase family. Homotetramer.

It catalyses the reaction L-glutamine + H2O = L-glutamate + NH4(+). This is Glutaminase from Alkaliphilus oremlandii (strain OhILAs) (Clostridium oremlandii (strain OhILAs)).